A 412-amino-acid polypeptide reads, in one-letter code: Putative oxidoreductase bli-4, mitochondrial (412 aa).

A mitochondrion-targeting transit peptide spans 1 to 55 (MSTKLCQRIARTATLSPTSLVPRSSRLIPIVSSAAVRPSSAIPTRRPFSTTESRY). NADP(+) contacts are provided by I108, N120, N186, Y269, K273, V308, T310, and Q312. Y269 acts as the Proton donor in catalysis. The Lowers pKa of active site Tyr role is filled by K273.

The protein belongs to the short-chain dehydrogenases/reductases (SDR) family.

It localises to the mitochondrion. In terms of biological role, may play a role as an NAD-dependent dehydrogenase in the mitochondria. The protein is Putative oxidoreductase bli-4, mitochondrial (bli-4) of Neurospora crassa (strain ATCC 24698 / 74-OR23-1A / CBS 708.71 / DSM 1257 / FGSC 987).